A 201-amino-acid polypeptide reads, in one-letter code: Mediator of RNA polymerase II transcription subunit 22 (201 aa).

Residues 93 to 123 (SVNESINQRNQQLRTLREECDKKLIALRDDI) adopt a coiled-coil conformation. Residues 182–201 (SQIHTPPHLNGHGAGMTEHT) form a disordered region.

Belongs to the Mediator complex subunit 22 family. Component of the Mediator complex.

Its subcellular location is the nucleus. Functionally, component of the Mediator complex, a coactivator involved in the regulated transcription of nearly all RNA polymerase II-dependent genes. Mediator functions as a bridge to convey information from gene-specific regulatory proteins to the basal RNA polymerase II transcription machinery. Mediator is recruited to promoters by direct interactions with regulatory proteins and serves as a scaffold for the assembly of a functional preinitiation complex with RNA polymerase II and the general transcription factors. This chain is Mediator of RNA polymerase II transcription subunit 22 (med22), found in Xenopus laevis (African clawed frog).